A 212-amino-acid polypeptide reads, in one-letter code: Ribosomal RNA large subunit methyltransferase E (212 aa).

Residues 1–10 (MATCRRRRRG) show a composition bias toward basic residues. The segment at 1 to 24 (MATCRRRRRGCNSQARRSRHESDP) is disordered. Residues Gly-66, Trp-68, Asp-86, Asp-102, and Asp-127 each coordinate S-adenosyl-L-methionine. Lys-167 (proton acceptor) is an active-site residue.

The protein belongs to the class I-like SAM-binding methyltransferase superfamily. RNA methyltransferase RlmE family.

Its subcellular location is the cytoplasm. It carries out the reaction uridine(2552) in 23S rRNA + S-adenosyl-L-methionine = 2'-O-methyluridine(2552) in 23S rRNA + S-adenosyl-L-homocysteine + H(+). Functionally, specifically methylates the uridine in position 2552 of 23S rRNA at the 2'-O position of the ribose in the fully assembled 50S ribosomal subunit. This Halorhodospira halophila (strain DSM 244 / SL1) (Ectothiorhodospira halophila (strain DSM 244 / SL1)) protein is Ribosomal RNA large subunit methyltransferase E.